Reading from the N-terminus, the 256-residue chain is GTP cyclohydrolase FolE2 (256 aa).

This sequence belongs to the GTP cyclohydrolase IV family.

The catalysed reaction is GTP + H2O = 7,8-dihydroneopterin 3'-triphosphate + formate + H(+). The protein operates within cofactor biosynthesis; 7,8-dihydroneopterin triphosphate biosynthesis; 7,8-dihydroneopterin triphosphate from GTP: step 1/1. In terms of biological role, converts GTP to 7,8-dihydroneopterin triphosphate. This Caldicellulosiruptor bescii (strain ATCC BAA-1888 / DSM 6725 / KCTC 15123 / Z-1320) (Anaerocellum thermophilum) protein is GTP cyclohydrolase FolE2.